Reading from the N-terminus, the 450-residue chain is 23S rRNA (uracil(1939)-C(5))-methyltransferase RlmD (450 aa).

The TRAM domain occupies 1 to 62 (MPVAGPLDIV…PSYEQAGVVN (62 aa)). [4Fe-4S] cluster is bound by residues C75, C81, C84, and C163. Residues Q271, F300, N305, E321, N349, and D370 each contribute to the S-adenosyl-L-methionine site. C406 (nucleophile) is an active-site residue.

The protein belongs to the class I-like SAM-binding methyltransferase superfamily. RNA M5U methyltransferase family. RlmD subfamily.

The enzyme catalyses uridine(1939) in 23S rRNA + S-adenosyl-L-methionine = 5-methyluridine(1939) in 23S rRNA + S-adenosyl-L-homocysteine + H(+). Its function is as follows. Catalyzes the formation of 5-methyl-uridine at position 1939 (m5U1939) in 23S rRNA. This Ralstonia pickettii (strain 12J) protein is 23S rRNA (uracil(1939)-C(5))-methyltransferase RlmD.